Reading from the N-terminus, the 336-residue chain is TBC1 domain family member 21 (336 aa).

Residues Gly57–Lys265 form the Rab-GAP TBC domain.

As to quaternary structure, interacts with ACTB. Interacts with ARMC12. Interacts with TOMM20 and DNAH7. Interacts with RAP1A. Interacts with RAB10. In terms of tissue distribution, expressed in testis, specifically in elongating and elongated spermatids (at protein level). Expressed in the sperm midpiece (at protein level).

The protein localises to the cytoplasmic vesicle. Its subcellular location is the secretory vesicle. It localises to the acrosome. The protein resides in the cytoplasm. It is found in the cytoskeleton. Acts as a GTPase-activating protein for Rab family protein (s). Essential for the establishment of male fertility, and is required for both the production of normal sperm number and sperm function. Plays an important role in the formation of intact mitochondria, outer dense fibers and axoneme within the sperm tail. Essential for sperm mitochondrial sheath formation and for the interactions of ARMC12 with VDAC2 and VDAC3. May be involved in acrosome formation and cytoskeletal reorganization during spermiogenesis, possibly by regulating RAB3A activity. This is TBC1 domain family member 21 from Mus musculus (Mouse).